The sequence spans 363 residues: SWIRM domain-containing protein YOR338W (363 aa).

Disordered stretches follow at residues 1 to 22 (MLDN…GGIN) and 186 to 208 (LYED…VPVR). Positions 186–196 (LYEDDGNRSEN) are enriched in basic and acidic residues. The region spanning 266 to 363 (LKVEWKGSPM…LQDKHFEKYL (98 aa)) is the SWIRM domain.

The chain is SWIRM domain-containing protein YOR338W from Saccharomyces cerevisiae (strain ATCC 204508 / S288c) (Baker's yeast).